A 341-amino-acid polypeptide reads, in one-letter code: Peptidoglycan recognition protein 3 (341 aa).

The N-terminal stretch at 1-17 is a signal peptide; it reads MGTLPWLLAFFILGLQA. 2 N-acetylmuramoyl-L-alanine amidase domains span residues 77–179 and 200–325; these read TIGW…KVCP and PAKY…ILSP. The N-linked (GlcNAc...) asparagine glycan is linked to Asn-113. Intrachain disulfides connect Cys-178–Cys-300, Cys-194–Cys-238, and Cys-214–Cys-220. Peptidoglycan contacts are provided by His-231, Arg-235, and Tyr-242. The segment at 264–269 is interaction with murein; the sequence is HTYGFN.

Belongs to the N-acetylmuramoyl-L-alanine amidase 2 family. Monomer. Homodimer; disulfide-linked. Heterodimer with PGLYRP4; disulfide-linked. N-glycosylated. In terms of tissue distribution, detected in skin epidermis, eccrine sweat glands and ducts, ciliary body epithelial cells of the eye, in small intestine, colon, stomach and in mature epithelial cells of the tongue (at protein level). Highly expressed in skin and esophagus, expressed also in tonsils and thymus and to a much lesser extent in the stomach, descending colon, rectum and brain.

Its subcellular location is the secreted. Functionally, pattern receptor that binds to murein peptidoglycans (PGN) of Gram-positive bacteria. Has bactericidal activity towards Gram-positive bacteria. May kill Gram-positive bacteria by interfering with peptidoglycan biosynthesis. Also binds to Gram-negative bacteria, and has bacteriostatic activity towards Gram-negative bacteria. Plays a role in innate immunity. The protein is Peptidoglycan recognition protein 3 (PGLYRP3) of Homo sapiens (Human).